The following is a 754-amino-acid chain: 5-methyltetrahydropteroyltriglutamate--homocysteine methyltransferase (754 aa).

Residues 17–20 (RELK) and K117 each bind 5-methyltetrahydropteroyltri-L-glutamate. Residues 431-433 (IGS) and E484 contribute to the L-homocysteine site. Residues 431–433 (IGS) and E484 each bind L-methionine. Residues 515 to 516 (RC) and W561 each bind 5-methyltetrahydropteroyltri-L-glutamate. D599 contributes to the L-homocysteine binding site. D599 lines the L-methionine pocket. 5-methyltetrahydropteroyltri-L-glutamate is bound at residue E605. Zn(2+) contacts are provided by H641, C643, and E665. H694 (proton donor) is an active-site residue. C726 serves as a coordination point for Zn(2+).

It belongs to the vitamin-B12 independent methionine synthase family. It depends on Zn(2+) as a cofactor.

The catalysed reaction is 5-methyltetrahydropteroyltri-L-glutamate + L-homocysteine = tetrahydropteroyltri-L-glutamate + L-methionine. It participates in amino-acid biosynthesis; L-methionine biosynthesis via de novo pathway; L-methionine from L-homocysteine (MetE route): step 1/1. Its function is as follows. Catalyzes the transfer of a methyl group from 5-methyltetrahydrofolate to homocysteine resulting in methionine formation. In Salmonella typhimurium (strain LT2 / SGSC1412 / ATCC 700720), this protein is 5-methyltetrahydropteroyltriglutamate--homocysteine methyltransferase.